A 339-amino-acid chain; its full sequence is Deubiquitinase and deneddylase Dub2 (339 aa).

Residues Ile36–Phe56 form a helical membrane-spanning segment. Residues His203, Asp220, and Cys282 contribute to the active site.

The protein belongs to the peptidase C48 family.

The protein resides in the secreted. It is found in the host cell. The protein localises to the membrane. Its function is as follows. Effector proteins function to alter host cell physiology and promote bacterial survival in host tissues. This protease possesses deubiquitinating and deneddylating activities. In Chlamydia trachomatis serovar D (strain ATCC VR-885 / DSM 19411 / UW-3/Cx), this protein is Deubiquitinase and deneddylase Dub2 (cdu2).